Consider the following 458-residue polypeptide: tRNA modification GTPase MnmE (458 aa).

(6S)-5-formyl-5,6,7,8-tetrahydrofolate-binding residues include Arg23, Glu87, and Arg126. Residues 224–380 form the TrmE-type G domain; it reads GLSMVIVGKP…LKSKIKDLFF (157 aa). Asn234 serves as a coordination point for K(+). GTP is bound by residues 234 to 239, 253 to 259, and 278 to 281; these read NVGKSS, TDIAGTT, and DTAG. A Mg(2+)-binding site is contributed by Ser238. The K(+) site is built by Thr253, Ile255, and Thr258. Thr259 is a Mg(2+) binding site. Lys458 is a (6S)-5-formyl-5,6,7,8-tetrahydrofolate binding site.

This sequence belongs to the TRAFAC class TrmE-Era-EngA-EngB-Septin-like GTPase superfamily. TrmE GTPase family. As to quaternary structure, homodimer. Heterotetramer of two MnmE and two MnmG subunits. K(+) is required as a cofactor.

Its subcellular location is the cytoplasm. Its function is as follows. Exhibits a very high intrinsic GTPase hydrolysis rate. Involved in the addition of a carboxymethylaminomethyl (cmnm) group at the wobble position (U34) of certain tRNAs, forming tRNA-cmnm(5)s(2)U34. This chain is tRNA modification GTPase MnmE, found in Clostridium perfringens (strain ATCC 13124 / DSM 756 / JCM 1290 / NCIMB 6125 / NCTC 8237 / Type A).